The chain runs to 206 residues: LOB domain-containing protein 2 (206 aa).

A disordered region spans residues 1–20 (MMQRNSNNTSITSNISNNSS). The LOB domain maps to 23 to 123 (QACASCKHQR…KSLVHNQPLI (101 aa)).

The protein belongs to the LOB domain-containing protein family.

The protein is LOB domain-containing protein 2 (LBD2) of Arabidopsis thaliana (Mouse-ear cress).